The following is a 436-amino-acid chain: RNA polymerase sigma-54 factor (436 aa).

Positions 324-343 (TLREVADCLSLHESTVSRAI) form a DNA-binding region, H-T-H motif. Positions 413–421 (SRRTVAKYR) match the RPON box motif.

The protein belongs to the sigma-54 factor family. As to quaternary structure, interacts transiently with the RNAP core.

In terms of biological role, sigma factors are initiation factors that promote the attachment of RNA polymerase (RNAP) to specific initiation sites and are then released. This sigma factor is responsible for the expression of the levanase operon. The open complex (sigma-54 and core RNA polymerase) serves as the receptor for receipt of the melting signal from the remotely bound activator protein LevR for the expression of the levanase operon. Associates with the RNAP core only in stationary phase cells. This is RNA polymerase sigma-54 factor (sigL) from Bacillus subtilis (strain 168).